The primary structure comprises 83 residues: UPF0346 protein M28_Spy0369 (83 aa).

It belongs to the UPF0346 family.

The protein is UPF0346 protein M28_Spy0369 of Streptococcus pyogenes serotype M28 (strain MGAS6180).